Reading from the N-terminus, the 756-residue chain is Tubulin glycylase 3B (756 aa).

Positions 104–123 (TPLPRTVTSSPTAPEAQKRQ) are disordered. The region spanning 272-629 (LEERMAFIED…DLPKNPTAAT (358 aa)) is the TTL domain. ATP-binding positions include 440-443 (QKYI), K453, and D455. The tract at residues 709–736 (ITKKKKLSASAGSSTAASAQPSTQNLTT) is disordered. Residues 716 to 727 (SASAGSSTAASA) are compositionally biased toward low complexity.

It localises to the cytoplasm. The protein resides in the cytoskeleton. The protein localises to the nucleus. Functionally, essential glycylase which modifies both tubulin and non-tubulin proteins, generating side chains of glycine on the gamma-carboxyl groups of specific glutamate residues of target proteins. Monoglycylates alpha-tubulin by adding a single glycine chain to generate monoglycine side chains, but is not involved in elongation step to generate polyglycine side chains on alpha-tubulin. Has the ability to both mono- and polyglycylate non-tubulin proteins such as up (Troponin T). Required for early steps of spermatogenesis. The protein is Tubulin glycylase 3B (TTLL3B) of Drosophila melanogaster (Fruit fly).